A 314-amino-acid polypeptide reads, in one-letter code: Melanoma-associated antigen 12 (314 aa).

Positions 1 to 14 (MPLEQRSQHCKPEE) are enriched in basic and acidic residues. The segment at 1-72 (MPLEQRSQHC…HSPQGASTLP (72 aa)) is disordered. Residues 17 to 44 (EAQGEALGLVGAQAPATEEQETASSSST) are compositionally biased toward low complexity. The region spanning 109 to 308 (LSRKMAELVH…ISYPPLHEWA (200 aa)) is the MAGE domain.

Expressed in many tumors of several types, such as melanoma, head and neck squamous cell carcinoma, lung carcinoma and breast carcinoma, but not in normal tissues except for testes.

Functionally, not known, though may play a role tumor transformation or progression. In vitro promotes cell viability in melanoma cell lines. In Homo sapiens (Human), this protein is Melanoma-associated antigen 12 (MAGEA12).